A 157-amino-acid chain; its full sequence is Myosin essential light chain, striated adductor muscle (157 aa).

EF-hand domains are found at residues 7–44 and 82–117; these read DEIDDLKDVFELFDFWDGRDGAVDAFKLGDVCRCLGIN and GTFADYMEAFKTFDREGQGFISGAELRHVLTALGER.

In terms of biological role, in molluscan muscle, calcium regulation is associated with myosin rather than with actin. Muscle myosin contains two types of light chains: the catalytic light chain, essential for ATPase activity, and the regulatory light chain, a calcium-binding protein responsible for Ca(2+) dependent binding and Ca(2+) dependent Mg-ATPase activity. The polypeptide is Myosin essential light chain, striated adductor muscle (Argopecten irradians (Bay scallop)).